Consider the following 286-residue polypeptide: Pantothenate synthetase (286 aa).

30 to 37 (MGYFHEGH) lines the ATP pocket. The Proton donor role is filled by His-37. Position 61 (Gln-61) interacts with (R)-pantoate. A beta-alanine-binding site is contributed by Gln-61. 147–150 (GKKD) lines the ATP pocket. Gln-153 contributes to the (R)-pantoate binding site. 184-187 (MSSR) lines the ATP pocket.

Belongs to the pantothenate synthetase family. In terms of assembly, homodimer.

It localises to the cytoplasm. It catalyses the reaction (R)-pantoate + beta-alanine + ATP = (R)-pantothenate + AMP + diphosphate + H(+). It functions in the pathway cofactor biosynthesis; (R)-pantothenate biosynthesis; (R)-pantothenate from (R)-pantoate and beta-alanine: step 1/1. In terms of biological role, catalyzes the condensation of pantoate with beta-alanine in an ATP-dependent reaction via a pantoyl-adenylate intermediate. The polypeptide is Pantothenate synthetase (Syntrophus aciditrophicus (strain SB)).